We begin with the raw amino-acid sequence, 416 residues long: CapZ-interacting protein (416 aa).

2 disordered regions span residues 1–84 and 98–416; these read MEER…KSSP and AALL…DTKM. Positions 8-20 are enriched in polar residues; sequence TNANVDNSASPSV. Ser17 carries the post-translational modification Phosphoserine. Residue Ser68 is modified to Phosphoserine; by MAPK8; in vitro. At Ser82 the chain carries Phosphoserine. Ser83 bears the Phosphoserine; by MAPK8; in vitro mark. Residue Ser105 is modified to Phosphoserine. Ser108 carries the post-translational modification Phosphoserine; by MAPK12 and MAPK13. Ser116, Ser120, and Ser123 each carry phosphoserine. The residue at position 124 (Thr124) is a Phosphothreonine. Ser126, Ser127, Ser135, and Ser143 each carry phosphoserine. The span at 159 to 176 shows a compositional bias: basic residues; that stretch reads VRTRGSIKRRPPSRRFRR. Position 177 is a phosphoserine (Ser177). Ser179 is subject to Phosphoserine; by MAPKAPK2 and MAPKAPK3. Ser216 carries the post-translational modification Phosphoserine; by MAPK8; in vitro. An RCSD domain is found at 227–330; that stretch reads GVRTLGPAEK…RVQNEEVGPE (104 aa). Position 244 is a phosphoserine; by MAPKAPK2 or MAPKAPK3; in vitro (Ser244). Residues 244–273 show a composition bias toward basic and acidic residues; sequence SRTEKQEEDRATEEAKNGEKARRSSEEVDG. 5 positions are modified to phosphoserine: Ser267, Ser268, Ser284, Ser298, and Ser333. Residues 292–349 are compositionally biased toward basic and acidic residues; it reads AENRCGSPREEKPAGEEAEMEKATEVKGERVQNEEVGPEHDSQETKKLEEGAAVKETP. Thr336 carries the phosphothreonine modification. Ser351 bears the Phosphoserine mark. The segment covering 360-372 has biased composition (basic and acidic residues); sequence DVPKQEKGKEKQQ. Over residues 382-397 the composition is skewed to polar residues; sequence SPQTGPAQLETSSEVQ.

As to quaternary structure, interacts with CAPZA2 and CAPZB. Dephosphorylation results in its dissociation from CAPZA2. In terms of tissue distribution, highly expressed in skeletal muscle and more weakly in cardiac muscle. Also expressed in several lymphoid organs, including spleen, thymus, peripheral blood leukocytes, lymph node and bone marrow.

Stress-induced phosphorylation of CAPZIP may regulate the ability of F-actin-capping protein to remodel actin filament assembly. The polypeptide is CapZ-interacting protein (RCSD1) (Homo sapiens (Human)).